Reading from the N-terminus, the 178-residue chain is MPALLFYLLGFCLLQGQVTGRVTYEWMMENVKICRNDFVRTAIEVCGHVHLERESPSPENPFLSSGPAAETVPSSIKKDAENANTMLESIPNLPQELTATLFEKQPSKLYLQYLPTLKKSNVSFEEFKKIIQNIQRGVQGSSASESNTFSRKKRQFSESLPEECCKYGCPRYYLLMYC.

An N-terminal signal peptide occupies residues Met-1 to Gly-20. Intrachain disulfides connect Cys-34-Cys-165, Cys-46-Cys-178, and Cys-164-Cys-169. Residues Glu-54 to Ser-150 constitute a propeptide, connecting peptide.

The protein belongs to the insulin family. Heterodimer of a B chain and an A chain linked by two disulfide bonds.

The protein localises to the secreted. This is Relaxin-like protein SQ10 from Oryctolagus cuniculus (Rabbit).